Consider the following 304-residue polypeptide: MDNINCLFNELLVIIIDFLSDNDKIKFITTCSRLYWFIDKIHYNSVYDYNKISHLSFVDKFKRIRFHAVNAGSIPSIVTDLVLDNNFTDSLKTCNLSKLLRIKLNFHQYKKNRNHILSNVKIDCSNSITISQIRYKTLKPTRLFSLIEPFSLLRPFILSDPYPINRIQIKGYDRDTNYGIPVHTPPEEILEDFGKHLEDIDKLITKNYKKFFPIKKSRPAYIPIVSRNSESSRQSNLNSPNDSVKFNEFNKSNKSTKTNPNNIHNIVTTMNSNKNFHKNKYKYQNRIIPKHSKYPKKFSKNKYH.

Over residues 226–244 (SRNSESSRQSNLNSPNDSV) the composition is skewed to polar residues. The interval 226–263 (SRNSESSRQSNLNSPNDSVKFNEFNKSNKSTKTNPNNI) is disordered. Residues 246–262 (FNEFNKSNKSTKTNPNN) show a composition bias toward low complexity.

This is an uncharacterized protein from Acanthamoeba polyphaga (Amoeba).